The chain runs to 145 residues: Large ribosomal subunit protein bL19 (145 aa).

Residues 112–130 (GKSARIKERRPAKAVEKTS) are compositionally biased toward basic and acidic residues. The interval 112–145 (GKSARIKERRPAKAVEKTSKPASAKKPAAKANKK) is disordered.

This sequence belongs to the bacterial ribosomal protein bL19 family.

Its function is as follows. This protein is located at the 30S-50S ribosomal subunit interface and may play a role in the structure and function of the aminoacyl-tRNA binding site. The chain is Large ribosomal subunit protein bL19 from Malacoplasma penetrans (strain HF-2) (Mycoplasma penetrans).